The following is a 162-amino-acid chain: Phosphopantetheine adenylyltransferase (162 aa).

Position 11 (Ser-11) interacts with substrate. ATP-binding positions include 11 to 12 (SF) and His-19. 3 residues coordinate substrate: Lys-43, Val-76, and Arg-90. ATP contacts are provided by residues 91–93 (GLR), Glu-101, and 126–132 (HLYISSS).

It belongs to the bacterial CoaD family. As to quaternary structure, homohexamer. Requires Mg(2+) as cofactor.

The protein localises to the cytoplasm. The catalysed reaction is (R)-4'-phosphopantetheine + ATP + H(+) = 3'-dephospho-CoA + diphosphate. The protein operates within cofactor biosynthesis; coenzyme A biosynthesis; CoA from (R)-pantothenate: step 4/5. Reversibly transfers an adenylyl group from ATP to 4'-phosphopantetheine, yielding dephospho-CoA (dPCoA) and pyrophosphate. This Streptococcus pneumoniae (strain JJA) protein is Phosphopantetheine adenylyltransferase.